Here is a 150-residue protein sequence, read N- to C-terminus: Protein A151R (150 aa).

Belongs to the asfivirus A151R family. As to quaternary structure, monomer. Homodimer. Interacts with protein B119L. Interacts with membrane protein E248R. Zn(2+) is required as a cofactor.

Its function is as follows. May participate in a redox cascade for the formation of disulfide bonds in viral proteins. The sequence is that of Protein A151R from African swine fever virus (isolate Pig/Kenya/KEN-50/1950) (ASFV).